The following is a 185-amino-acid chain: dCTP deaminase (185 aa).

Residues 107–112 (KSTYAR), 131–133 (TLE), Q152, Y166, and Q176 each bind dCTP. E133 functions as the Proton donor/acceptor in the catalytic mechanism.

The protein belongs to the dCTP deaminase family. In terms of assembly, homotrimer.

The catalysed reaction is dCTP + H2O + H(+) = dUTP + NH4(+). It functions in the pathway pyrimidine metabolism; dUMP biosynthesis; dUMP from dCTP (dUTP route): step 1/2. In terms of biological role, catalyzes the deamination of dCTP to dUTP. The chain is dCTP deaminase from Wolbachia sp. subsp. Brugia malayi (strain TRS).